Reading from the N-terminus, the 182-residue chain is ATP-dependent protease subunit HslV (182 aa).

The active site involves Thr6. Na(+)-binding residues include Ala164, Cys167, and Thr170.

This sequence belongs to the peptidase T1B family. HslV subfamily. In terms of assembly, a double ring-shaped homohexamer of HslV is capped on each side by a ring-shaped HslU homohexamer. The assembly of the HslU/HslV complex is dependent on binding of ATP.

It localises to the cytoplasm. It catalyses the reaction ATP-dependent cleavage of peptide bonds with broad specificity.. With respect to regulation, allosterically activated by HslU binding. Protease subunit of a proteasome-like degradation complex believed to be a general protein degrading machinery. The chain is ATP-dependent protease subunit HslV from Borrelia garinii subsp. bavariensis (strain ATCC BAA-2496 / DSM 23469 / PBi) (Borreliella bavariensis).